The sequence spans 503 residues: Cytochrome P450 11B1, mitochondrial (503 aa).

A mitochondrion-targeting transit peptide spans 1 to 24 (MALRAKAEVCMAAPWLSLQRARAL). Cysteine 450 provides a ligand contact to heme.

Belongs to the cytochrome P450 family. Heme serves as cofactor.

The protein resides in the mitochondrion inner membrane. The enzyme catalyses a steroid + 2 reduced [adrenodoxin] + O2 + 2 H(+) = an 11beta-hydroxysteroid + 2 oxidized [adrenodoxin] + H2O. The catalysed reaction is 11-deoxycortisol + 2 reduced [adrenodoxin] + O2 + 2 H(+) = cortisol + 2 oxidized [adrenodoxin] + H2O. It catalyses the reaction 21-hydroxyprogesterone + 2 reduced [adrenodoxin] + O2 + 2 H(+) = corticosterone + 2 oxidized [adrenodoxin] + H2O. It carries out the reaction 21-hydroxyprogesterone + 2 reduced [adrenodoxin] + O2 + 2 H(+) = 18-hydroxy-11-deoxycorticosterone + 2 oxidized [adrenodoxin] + H2O. The enzyme catalyses 21-hydroxyprogesterone + 2 reduced [adrenodoxin] + O2 + 2 H(+) = 19-hydroxy-11-deoxycorticosterone + 2 oxidized [adrenodoxin] + H2O. The catalysed reaction is cortisol + 2 reduced [adrenodoxin] + O2 + 2 H(+) = 18-hydroxycortisol + 2 oxidized [adrenodoxin] + H2O. It catalyses the reaction 11-deoxycortisol + 2 reduced [adrenodoxin] + O2 + 2 H(+) = 18-hydroxy-11-deoxycortisol + 2 oxidized [adrenodoxin] + H2O. It participates in steroid biosynthesis; glucocorticoid biosynthesis. The protein operates within steroid hormone biosynthesis. Functionally, a cytochrome P450 monooxygenase involved in the biosynthesis of adrenal corticoids. Catalyzes a variety of reactions that are essential for many species, including detoxification, defense, and the formation of endogenous chemicals like steroid hormones. Steroid 11beta, 18- and 19-hydroxylase with preferred regioselectivity at 11beta, then 18, and lastly 19. Catalyzes the hydroxylation of 11-deoxycortisol and 11-deoxycorticosterone (21-hydroxyprogesterone) at 11beta position, yielding cortisol or corticosterone, respectively, but cannot produce aldosterone. Mechanistically, uses molecular oxygen inserting one oxygen atom into a substrate for hydroxylation and reducing the second into a water molecule. Two electrons are provided by NADPH via a two-protein mitochondrial transfer system comprising flavoprotein FDXR (adrenodoxin/ferredoxin reductase) and nonheme iron-sulfur protein FDX1 or FDX2 (adrenodoxin/ferredoxin). Due to its lack of 18-oxidation activity, it is incapable of generating aldosterone. Could also be involved in the androgen metabolic pathway. The polypeptide is Cytochrome P450 11B1, mitochondrial (CYP11B1) (Papio hamadryas ursinus (Chacma baboon)).